The following is a 95-amino-acid chain: Large ribosomal subunit protein uL23 (95 aa).

The protein belongs to the universal ribosomal protein uL23 family. In terms of assembly, part of the 50S ribosomal subunit. Contacts protein L29, and trigger factor when it is bound to the ribosome.

One of the early assembly proteins it binds 23S rRNA. One of the proteins that surrounds the polypeptide exit tunnel on the outside of the ribosome. Forms the main docking site for trigger factor binding to the ribosome. In Deinococcus deserti (strain DSM 17065 / CIP 109153 / LMG 22923 / VCD115), this protein is Large ribosomal subunit protein uL23.